The sequence spans 421 residues: Ig-like V-type domain-containing protein FAM187A (421 aa).

Residues 1–18 (MNLAHTTVLLWAWGSLQA) form the signal peptide. Residues 19 to 377 (FEIVEKENIF…VSFSDPETRA (359 aa)) are Extracellular-facing. An Ig-like V-type domain is found at 268–362 (PWLPQVPIQF…IAGFRLGVTS (95 aa)). An intrachain disulfide couples Cys290 to Cys346. A glycan (N-linked (GlcNAc...) asparagine) is linked at Asn318. A helical membrane pass occupies residues 378 to 398 (ALGLILIGYMLITVIFISIHL). The Cytoplasmic portion of the chain corresponds to 399-421 (CRCCCYLFRFCPNFSPRLSRPQL).

This sequence belongs to the FAM187 family.

Its subcellular location is the membrane. The protein is Ig-like V-type domain-containing protein FAM187A (FAM187A) of Bos taurus (Bovine).